The sequence spans 853 residues: Leucine--tRNA ligase (853 aa).

A 'HIGH' region motif is present at residues 40–50 (PYPSGKMHMGH). The 'KMSKS' region signature appears at 609–613 (KMSKS). Lys-612 lines the ATP pocket.

The protein belongs to the class-I aminoacyl-tRNA synthetase family.

It is found in the cytoplasm. The catalysed reaction is tRNA(Leu) + L-leucine + ATP = L-leucyl-tRNA(Leu) + AMP + diphosphate. In Brachyspira hyodysenteriae (strain ATCC 49526 / WA1), this protein is Leucine--tRNA ligase.